Reading from the N-terminus, the 400-residue chain is CCA-adding enzyme (400 aa).

Residues G8 and R11 each coordinate ATP. G8 and R11 together coordinate CTP. D21 and D23 together coordinate Mg(2+). 3 residues coordinate ATP: R91, R137, and R140. Residues R91, R137, and R140 each coordinate CTP. The HD domain occupies 217–322 (NFQYAMTALK…IDLFNKWDVW (106 aa)).

This sequence belongs to the tRNA nucleotidyltransferase/poly(A) polymerase family. Bacterial CCA-adding enzyme type 2 subfamily. Requires Mg(2+) as cofactor.

The catalysed reaction is a tRNA precursor + 2 CTP + ATP = a tRNA with a 3' CCA end + 3 diphosphate. It carries out the reaction a tRNA with a 3' CCA end + 2 CTP + ATP = a tRNA with a 3' CCACCA end + 3 diphosphate. In terms of biological role, catalyzes the addition and repair of the essential 3'-terminal CCA sequence in tRNAs without using a nucleic acid template. Adds these three nucleotides in the order of C, C, and A to the tRNA nucleotide-73, using CTP and ATP as substrates and producing inorganic pyrophosphate. tRNA 3'-terminal CCA addition is required both for tRNA processing and repair. Also involved in tRNA surveillance by mediating tandem CCA addition to generate a CCACCA at the 3' terminus of unstable tRNAs. While stable tRNAs receive only 3'-terminal CCA, unstable tRNAs are marked with CCACCA and rapidly degraded. This chain is CCA-adding enzyme, found in Actinobacillus succinogenes (strain ATCC 55618 / DSM 22257 / CCUG 43843 / 130Z).